Here is a 282-residue protein sequence, read N- to C-terminus: MLLAVPSKGRLQEPTLKLLEAVGIRPLASDERALVVPTSWSDVNLIRARPEDIPYLVESGRVWAGITGHDYVVESGSNVAEVLELEFGRGKLVVAVPRSSGITSVEDLPPGARIATKFVNIAYNYFAELGKRVRIIRVTGSVEVLPQLGIADAILDVMATGTTLEVHGLVPIATVLETSARLVVNPQYVEHDLTKKLVTFIKGFYAAQGKKMVFLNVPASRLDAVLAVLPAMEAPSVTKLAKGDVYEVFSVVPEDVLPDLVMKLKEAGARDIVITPIEKLIV.

The protein belongs to the ATP phosphoribosyltransferase family. Long subfamily. Requires Mg(2+) as cofactor.

The protein resides in the cytoplasm. The catalysed reaction is 1-(5-phospho-beta-D-ribosyl)-ATP + diphosphate = 5-phospho-alpha-D-ribose 1-diphosphate + ATP. Its pathway is amino-acid biosynthesis; L-histidine biosynthesis; L-histidine from 5-phospho-alpha-D-ribose 1-diphosphate: step 1/9. With respect to regulation, feedback inhibited by histidine. In terms of biological role, catalyzes the condensation of ATP and 5-phosphoribose 1-diphosphate to form N'-(5'-phosphoribosyl)-ATP (PR-ATP). Has a crucial role in the pathway because the rate of histidine biosynthesis seems to be controlled primarily by regulation of HisG enzymatic activity. The chain is ATP phosphoribosyltransferase from Pyrobaculum aerophilum (strain ATCC 51768 / DSM 7523 / JCM 9630 / CIP 104966 / NBRC 100827 / IM2).